A 314-amino-acid chain; its full sequence is Oxaloacetate tautomerase FAHD2A, mitochondrial (314 aa).

The transit peptide at 1–84 (MLVSGRRRLL…ATLSVARRAL (84 aa)) directs the protein to the mitochondrion. Mg(2+) is bound by residues glutamate 159, glutamate 161, and aspartate 190.

This sequence belongs to the FAH family. Requires Mg(2+) as cofactor. It depends on Mn(2+) as a cofactor.

The protein resides in the mitochondrion. The enzyme catalyses oxaloacetate = enol-oxaloacetate. Tautomerase that converts enol-oxaloacetate, a strong inhibitor of succinate dehydrogenase, to the physiological keto form of oxaloacetate. It is thereby required to maximize aerobic respiration efficiency by preventing succinate dehydrogenase inhibition. This chain is Oxaloacetate tautomerase FAHD2A, mitochondrial, found in Homo sapiens (Human).